A 316-amino-acid chain; its full sequence is ATP synthase gamma chain (316 aa).

This sequence belongs to the ATPase gamma chain family. In terms of assembly, F-type ATPases have 2 components, CF(1) - the catalytic core - and CF(0) - the membrane proton channel. CF(1) has five subunits: alpha(3), beta(3), gamma(1), delta(1), epsilon(1). CF(0) has three main subunits: a, b and c.

Its subcellular location is the cellular thylakoid membrane. In terms of biological role, produces ATP from ADP in the presence of a proton gradient across the membrane. The gamma chain is believed to be important in regulating ATPase activity and the flow of protons through the CF(0) complex. The chain is ATP synthase gamma chain from Prochlorococcus marinus (strain MIT 9215).